The primary structure comprises 295 residues: Light-independent protochlorophyllide reductase iron-sulfur ATP-binding protein (295 aa).

ATP is bound by residues Gly-10–Thr-15 and Lys-39. Position 14 (Ser-14) interacts with Mg(2+). Residues Cys-95 and Cys-129 each contribute to the [4Fe-4S] cluster site. Position 180-181 (Asn-180–Arg-181) interacts with ATP. Over residues Thr-275–Ser-289 the composition is skewed to basic and acidic residues. The tract at residues Thr-275–Leu-295 is disordered.

It belongs to the NifH/BchL/ChlL family. Homodimer. Protochlorophyllide reductase is composed of three subunits; ChlL, ChlN and ChlB. The cofactor is [4Fe-4S] cluster.

Its subcellular location is the plastid. The protein resides in the chloroplast. It catalyses the reaction chlorophyllide a + oxidized 2[4Fe-4S]-[ferredoxin] + 2 ADP + 2 phosphate = protochlorophyllide a + reduced 2[4Fe-4S]-[ferredoxin] + 2 ATP + 2 H2O. Its pathway is porphyrin-containing compound metabolism; chlorophyll biosynthesis (light-independent). In terms of biological role, component of the dark-operative protochlorophyllide reductase (DPOR) that uses Mg-ATP and reduced ferredoxin to reduce ring D of protochlorophyllide (Pchlide) to form chlorophyllide a (Chlide). This reaction is light-independent. The L component serves as a unique electron donor to the NB-component of the complex, and binds Mg-ATP. The polypeptide is Light-independent protochlorophyllide reductase iron-sulfur ATP-binding protein (Physcomitrium patens (Spreading-leaved earth moss)).